The following is a 360-amino-acid chain: Mannose-1-phosphate guanyltransferase beta-B (360 aa).

Belongs to the transferase hexapeptide repeat family.

The catalysed reaction is alpha-D-mannose 1-phosphate + GTP + H(+) = GDP-alpha-D-mannose + diphosphate. It participates in nucleotide-sugar biosynthesis; GDP-alpha-D-mannose biosynthesis; GDP-alpha-D-mannose from alpha-D-mannose 1-phosphate (GTP route): step 1/1. Its function is as follows. Catalyzes the formation of GDP-mannose, an essential precursor of glycan moieties of glycoproteins and glycolipids. The protein is Mannose-1-phosphate guanyltransferase beta-B (gmppb-b) of Xenopus laevis (African clawed frog).